We begin with the raw amino-acid sequence, 514 residues long: ATP synthase subunit alpha (514 aa).

Gly170–Thr177 is an ATP binding site.

Belongs to the ATPase alpha/beta chains family. F-type ATPases have 2 components, CF(1) - the catalytic core - and CF(0) - the membrane proton channel. CF(1) has five subunits: alpha(3), beta(3), gamma(1), delta(1), epsilon(1). CF(0) has three main subunits: a(1), b(2) and c(9-12). The alpha and beta chains form an alternating ring which encloses part of the gamma chain. CF(1) is attached to CF(0) by a central stalk formed by the gamma and epsilon chains, while a peripheral stalk is formed by the delta and b chains.

The protein localises to the cell inner membrane. The catalysed reaction is ATP + H2O + 4 H(+)(in) = ADP + phosphate + 5 H(+)(out). In terms of biological role, produces ATP from ADP in the presence of a proton gradient across the membrane. The alpha chain is a regulatory subunit. The protein is ATP synthase subunit alpha of Pseudomonas fluorescens (strain SBW25).